A 288-amino-acid chain; its full sequence is Syntaxin PEP12 (288 aa).

At 1–268 the chain is on the cytoplasmic side; that stretch reads MSEDEFFGGD…RYQKRTSRWR (268 aa). Phosphoserine occurs at positions 2 and 23. The t-SNARE coiled-coil homology domain occupies 195-257; the sequence is QNLIEQRDQE…QLASDELRKA (63 aa). The chain crosses the membrane as a helical; Anchor for type IV membrane protein span at residues 269 to 288; sequence VYLLIVLLVMLLFIFLIMKL.

The protein belongs to the syntaxin family. Post-translationally, ubiquitinated.

It is found in the membrane. Functionally, plays a role in the sorting and targeting of vacuolar proteases. The chain is Syntaxin PEP12 (PEP12) from Saccharomyces cerevisiae (strain ATCC 204508 / S288c) (Baker's yeast).